The chain runs to 103 residues: Co-chaperonin GroES (103 aa).

It belongs to the GroES chaperonin family. Heptamer of 7 subunits arranged in a ring. Interacts with the chaperonin GroEL.

The protein localises to the cytoplasm. Its function is as follows. Together with the chaperonin GroEL, plays an essential role in assisting protein folding. The GroEL-GroES system forms a nano-cage that allows encapsulation of the non-native substrate proteins and provides a physical environment optimized to promote and accelerate protein folding. GroES binds to the apical surface of the GroEL ring, thereby capping the opening of the GroEL channel. The protein is Co-chaperonin GroES of Parasynechococcus marenigrum (strain WH8102).